Here is a 355-residue protein sequence, read N- to C-terminus: Protein RecA (355 aa).

67–74 (GPESSGKT) provides a ligand contact to ATP. The disordered stretch occupies residues 331 to 355 (NQDDKPDFTPAAHEVDEGSEAKENF).

It belongs to the RecA family.

The protein resides in the cytoplasm. Functionally, can catalyze the hydrolysis of ATP in the presence of single-stranded DNA, the ATP-dependent uptake of single-stranded DNA by duplex DNA, and the ATP-dependent hybridization of homologous single-stranded DNAs. It interacts with LexA causing its activation and leading to its autocatalytic cleavage. The polypeptide is Protein RecA (Erwinia tasmaniensis (strain DSM 17950 / CFBP 7177 / CIP 109463 / NCPPB 4357 / Et1/99)).